The following is a 1266-amino-acid chain: Rho GTPase-activating protein 29 (1266 aa).

A phosphoserine mark is found at Ser166, Ser171, Ser174, and Ser185. The F-BAR domain occupies 187–457 (IELDNLLLKN…SAKLYDPGQE (271 aa)). The stretch at 291–413 (RKNEMEKQRK…EILTQLRTLV (123 aa)) forms a coiled coil. Residues Ser496, Ser516, and Ser549 each carry the phosphoserine modification. A compositionally biased stretch (low complexity) spans 538-556 (SESTGGSSESRSLDSESIS). The disordered stretch occupies residues 538 to 596 (SESTGGSSESRSLDSESISPGDFHRKLPRTPSSGTMSSADDLDEREPPSPSEAGPNSLG). Residues 609–654 (THKFRKLRSPTKCRDCEGIVMFPGVECEECLLVCHRKCLENLVIVC) form a Phorbol-ester/DAG-type zinc finger. The Rho-GAP domain occupies 668-883 (AEFIQVAKKE…FLITYAQKIF (216 aa)). Ser915, Ser951, and Ser1023 each carry phosphoserine. 3 disordered regions span residues 1033 to 1054 (AGSP…KFGK), 1114 to 1153 (VSTG…DSCP), and 1222 to 1248 (VQTS…QRPR). Positions 1115–1127 (STGNNRGHSSGAA) are enriched in polar residues. Over residues 1132–1148 (AHADPARSARDTSEHSS) the composition is skewed to basic and acidic residues. 2 positions are modified to phosphoserine: Ser1149 and Ser1151. The tract at residues 1263 to 1266 (PQFV) is interaction with PTPN13/PTPL1.

In terms of assembly, interacts with PTPN13/PTPL1. Interacts with RAP2A via its coiled coil domain. Interacts with RASIP1.

Its function is as follows. GTPase activator for the Rho-type GTPases by converting them to an inactive GDP-bound state. Has strong activity toward RHOA, and weaker activity toward RAC1 and CDC42. May act as a specific effector of RAP2A to regulate Rho. In concert with RASIP1, suppresses RhoA signaling and dampens ROCK and MYH9 activities in endothelial cells and plays an essential role in blood vessel tubulogenesis. The sequence is that of Rho GTPase-activating protein 29 (Arhgap29) from Rattus norvegicus (Rat).